Consider the following 242-residue polypeptide: MDVIYRSGTKLIWSSSMNDDRQTSSEDKLKGFEWWRRSLQYRTGLGLDEEEKLQFEHDYRVKNLPQKCDSCIEYRDWMFKYSPSVKFMMEHVQKLGGNLSSKNITCDMCDGMKGGGFHPEMGILLCSNWIKDKWQLEDILTHELVHAYDHLKFKVDLTNLKHHACTEIRASALSGECRILNEIKKTGLGDFGSKFQACVRRRAAISVSANPNCSSKEEAESVVNAVWESCFNDTRPFERVYR.

Residue H142 participates in a divalent metal cation binding. The active site involves E143. Residue H146 coordinates a divalent metal cation.

This sequence belongs to the peptidase M76 family.

Its subcellular location is the mitochondrion inner membrane. Functionally, has a dual role in the assembly of mitochondrial ATPase. Acts as a protease that removes N-terminal residues of mitochondrial ATPase CF(0) subunit 6 at the intermembrane space side. Also involved in the correct assembly of the membrane-embedded ATPase CF(0) particle, probably mediating association of subunit 6 with the subunit 9 ring. In Meyerozyma guilliermondii (strain ATCC 6260 / CBS 566 / DSM 6381 / JCM 1539 / NBRC 10279 / NRRL Y-324) (Yeast), this protein is Mitochondrial inner membrane protease ATP23 (ATP23).